A 130-amino-acid chain; its full sequence is Succinate dehydrogenase assembly factor 3, mitochondrial (130 aa).

A mitochondrion-targeting transit peptide spans 1-8 (MRPSLLRL).

It belongs to the complex I LYR family. SDHAF3 subfamily. As to quaternary structure, interacts with the iron-sulfur protein subunit within the SDH catalytic dimer.

Its subcellular location is the mitochondrion matrix. Its function is as follows. Plays an essential role in the assembly of succinate dehydrogenase (SDH), an enzyme complex (also referred to as respiratory complex II) that is a component of both the tricarboxylic acid (TCA) cycle and the mitochondrial electron transport chain, and which couples the oxidation of succinate to fumarate with the reduction of ubiquinone (coenzyme Q) to ubiquinol. Promotes maturation of the iron-sulfur protein subunit of the SDH catalytic dimer, protecting it from the deleterious effects of oxidants. May act together with SDHAF1. The sequence is that of Succinate dehydrogenase assembly factor 3, mitochondrial from Gibberella zeae (strain ATCC MYA-4620 / CBS 123657 / FGSC 9075 / NRRL 31084 / PH-1) (Wheat head blight fungus).